Consider the following 444-residue polypeptide: Protein EMP46 (444 aa).

The signal sequence occupies residues 1–46 (MTTRKTASSLQLLGKITGTKAGTKQKKMNFINGLIWLYMCVWMVHG). Residues 47–408 (KVTQKDELKW…YGKQTKGHDE (362 aa)) lie on the Lumenal side of the membrane. The L-type lectin-like domain occupies 52–269 (DELKWNKGYS…EILKMKLYDG (218 aa)). Residue Tyr-177 coordinates K(+). Residues Cys-196 and Cys-230 are joined by a disulfide bond. A helical membrane pass occupies residues 409–429 (IFSKISVWLALLIFIMITLAY). Positions 429 to 432 (YYMF) are mediates the interactions with COPI and COPII coat complexes. At 430–444 (YMFRINQDIKKVKLL) the chain is on the cytoplasmic side. The short motif at 440–444 (KVKLL) is the Di-lysine motif element.

The protein belongs to the EMP46/EMP47 family. Interacts with EMP47 in the endoplasmic reticulum membrane in order to be transported to the Golgi apparatus. Interacts with the coatomer proteins COP1, SEC21 and SEC23.

The protein resides in the golgi apparatus membrane. It is found in the endoplasmic reticulum membrane. Its function is as follows. Involved in the secretion of glycoproteins and in nucleus architecture and gene silencing. In Saccharomyces cerevisiae (strain ATCC 204508 / S288c) (Baker's yeast), this protein is Protein EMP46 (EMP46).